A 363-amino-acid polypeptide reads, in one-letter code: Spore germination protein YndE (363 aa).

10 helical membrane passes run 8–28, 41–61, 84–104, 113–133, 149–169, 189–209, 218–238, 273–293, 305–325, and 335–355; these read ITTAQATIIIINYMLAAGVLT, DGWISVLLGGVLAVIAGMIIA, LGHLISIVFITYFLALGAFEV, FFLLEGTPSWAIIMTVLWIGL, MIFPITVIIFLTIALMSLGIF, VKTTNLSFTCSEIMFILVAFM, AVVIGTGVVTSFYMITMIMVI, FLLVIWIMQLFATFIITFYAA, PLSCMFGLLPVIYILSCMPKN, and TVSHIALYIFGALPILLLVIS.

The protein belongs to the amino acid-polyamine-organocation (APC) superfamily. Spore germination protein (SGP) (TC 2.A.3.9) family.

The protein localises to the cell membrane. In terms of biological role, involved in the germinative response to L-alanine. Could be an amino acid transporter. The protein is Spore germination protein YndE (yndE) of Bacillus subtilis (strain 168).